Reading from the N-terminus, the 154-residue chain is 3-dehydroquinate dehydratase 2 (154 aa).

Tyr-23 serves as the catalytic Proton acceptor. Positions 79, 85, and 92 each coordinate substrate. Catalysis depends on His-105, which acts as the Proton donor. Substrate-binding positions include 106-107 (IS) and Arg-116.

The protein belongs to the type-II 3-dehydroquinase family. As to quaternary structure, homododecamer.

It catalyses the reaction 3-dehydroquinate = 3-dehydroshikimate + H2O. It participates in metabolic intermediate biosynthesis; chorismate biosynthesis; chorismate from D-erythrose 4-phosphate and phosphoenolpyruvate: step 3/7. Functionally, catalyzes a trans-dehydration via an enolate intermediate. This Ralstonia nicotianae (strain ATCC BAA-1114 / GMI1000) (Ralstonia solanacearum) protein is 3-dehydroquinate dehydratase 2 (aroQ2).